Consider the following 1137-residue polypeptide: AP-4 complex subunit epsilon-1 (1137 aa).

A phosphoserine mark is found at Ser-700 and Ser-857. Positions 727-1137 (SGALPVPQES…YQCQKVMEGS (411 aa)) are interaction with TEPSIN.

It belongs to the adaptor complexes large subunit family. As to quaternary structure, adaptor protein complex 4 (AP-4) is a heterotetramer composed of two large adaptins (epsilon-type subunit AP4E1 and beta-type subunit AP4B1), a medium adaptin (mu-type subunit AP4M1) and a small adaptin (sigma-type AP4S1). Interacts with TEPSIN. Interacts with GRIA2; probably indirect it mediates the somatodendritic localization of GRIA2 in neurons. In terms of tissue distribution, widely expressed.

The protein resides in the golgi apparatus. The protein localises to the trans-Golgi network membrane. Functionally, component of the adaptor protein complex 4 (AP-4). Adaptor protein complexes are vesicle coat components involved both in vesicle formation and cargo selection. They control the vesicular transport of proteins in different trafficking pathways. AP-4 forms a non clathrin-associated coat on vesicles departing the trans-Golgi network (TGN) and may be involved in the targeting of proteins from the trans-Golgi network (TGN) to the endosomal-lysosomal system. It is also involved in protein sorting to the basolateral membrane in epithelial cells and the proper asymmetric localization of somatodendritic proteins in neurons. AP-4 is involved in the recognition and binding of tyrosine-based sorting signals found in the cytoplasmic part of cargos, but may also recognize other types of sorting signal. This is AP-4 complex subunit epsilon-1 from Homo sapiens (Human).